The following is a 160-amino-acid chain: Endoribonuclease YbeY (160 aa).

The Zn(2+) site is built by His-125, His-129, and His-135.

Belongs to the endoribonuclease YbeY family. The cofactor is Zn(2+).

It localises to the cytoplasm. Single strand-specific metallo-endoribonuclease involved in late-stage 70S ribosome quality control and in maturation of the 3' terminus of the 16S rRNA. The protein is Endoribonuclease YbeY of Leuconostoc mesenteroides subsp. mesenteroides (strain ATCC 8293 / DSM 20343 / BCRC 11652 / CCM 1803 / JCM 6124 / NCDO 523 / NBRC 100496 / NCIMB 8023 / NCTC 12954 / NRRL B-1118 / 37Y).